The following is a 384-amino-acid chain: Fructose-1,6-bisphosphate aldolase/phosphatase (384 aa).

The Proton acceptor; for FBP phosphatase activity role is filled by D11. Positions 11, 18, 52, and 53 each coordinate Mg(2+). H18 is a beta-D-fructose 1,6-bisphosphate binding site. H18 is a binding site for dihydroxyacetone phosphate. Y90 contacts beta-D-fructose 1,6-bisphosphate. Q94 is a binding site for Mg(2+). A beta-D-fructose 1,6-bisphosphate-binding site is contributed by 103-104 (GN). D131 lines the Mg(2+) pocket. Residue K132 coordinates beta-D-fructose 1,6-bisphosphate. Position 132 (K132) interacts with dihydroxyacetone phosphate. The active-site Proton donor/acceptor; for FBP aldolase activity is Y228. Mg(2+) contacts are provided by K231, D232, and D233. The Schiff-base intermediate with DHAP; for FBP aldolase activity role is filled by K231. Beta-D-fructose 1,6-bisphosphate contacts are provided by residues 241-242 (QH), R265, D286, and Y347. Residues R265 and D286 each coordinate dihydroxyacetone phosphate.

Belongs to the FBP aldolase/phosphatase family. In terms of assembly, homooctamer; dimer of tetramers. Mg(2+) is required as a cofactor.

The catalysed reaction is beta-D-fructose 1,6-bisphosphate + H2O = beta-D-fructose 6-phosphate + phosphate. It catalyses the reaction beta-D-fructose 1,6-bisphosphate = D-glyceraldehyde 3-phosphate + dihydroxyacetone phosphate. The protein operates within carbohydrate biosynthesis; gluconeogenesis. Catalyzes two subsequent steps in gluconeogenesis: the aldol condensation of dihydroxyacetone phosphate (DHAP) and glyceraldehyde-3-phosphate (GA3P) to fructose-1,6-bisphosphate (FBP), and the dephosphorylation of FBP to fructose-6-phosphate (F6P). In Sulfurisphaera tokodaii (strain DSM 16993 / JCM 10545 / NBRC 100140 / 7) (Sulfolobus tokodaii), this protein is Fructose-1,6-bisphosphate aldolase/phosphatase.